We begin with the raw amino-acid sequence, 267 residues long: Diphthine--ammonia ligase (267 aa).

Tyr97 is subject to Phosphotyrosine.

Belongs to the Diphthine--ammonia ligase family.

The enzyme catalyses diphthine-[translation elongation factor 2] + NH4(+) + ATP = diphthamide-[translation elongation factor 2] + AMP + diphosphate + H(+). It participates in protein modification; peptidyl-diphthamide biosynthesis. Amidase that may catalyze the last step of diphthamide biosynthesis using ammonium and ATP. Diphthamide biosynthesis consists in the conversion of an L-histidine residue in the translation elongation factor (EEF2) to diphthamide. The protein is Diphthine--ammonia ligase of Homo sapiens (Human).